The primary structure comprises 570 residues: Formate--tetrahydrofolate ligase (570 aa).

65–72 (TPLGEGKT) is a binding site for ATP.

The protein belongs to the formate--tetrahydrofolate ligase family.

It carries out the reaction (6S)-5,6,7,8-tetrahydrofolate + formate + ATP = (6R)-10-formyltetrahydrofolate + ADP + phosphate. It functions in the pathway one-carbon metabolism; tetrahydrofolate interconversion. This chain is Formate--tetrahydrofolate ligase, found in Herpetosiphon aurantiacus (strain ATCC 23779 / DSM 785 / 114-95).